The following is a 394-amino-acid chain: LL-diaminopimelate aminotransferase (394 aa).

Substrate is bound by residues Tyr14 and Gly41. Pyridoxal 5'-phosphate is bound by residues Tyr71, 104–105 (AK), Tyr128, Asn174, Tyr205, and 233–235 (SFS). Substrate-binding residues include Lys105, Tyr128, and Asn174. Position 236 is an N6-(pyridoxal phosphate)lysine (Lys236). Pyridoxal 5'-phosphate contacts are provided by Arg244 and Asn275. 2 residues coordinate substrate: Asn275 and Arg369.

It belongs to the class-I pyridoxal-phosphate-dependent aminotransferase family. LL-diaminopimelate aminotransferase subfamily. As to quaternary structure, homodimer. Requires pyridoxal 5'-phosphate as cofactor.

The catalysed reaction is (2S,6S)-2,6-diaminopimelate + 2-oxoglutarate = (S)-2,3,4,5-tetrahydrodipicolinate + L-glutamate + H2O + H(+). The protein operates within amino-acid biosynthesis; L-lysine biosynthesis via DAP pathway; LL-2,6-diaminopimelate from (S)-tetrahydrodipicolinate (aminotransferase route): step 1/1. In terms of biological role, involved in the synthesis of meso-diaminopimelate (m-DAP or DL-DAP), required for both lysine and peptidoglycan biosynthesis. Catalyzes the direct conversion of tetrahydrodipicolinate to LL-diaminopimelate. Is also able to use meso-diaminopimelate, cystathionine, lysine or ornithine as substrates. The protein is LL-diaminopimelate aminotransferase of Chlamydia trachomatis serovar D (strain ATCC VR-885 / DSM 19411 / UW-3/Cx).